A 354-amino-acid polypeptide reads, in one-letter code: 3'-5' exonuclease (354 aa).

A disordered region spans residues 1-120 (MERFLTKMPI…PSPEKEKPEK (120 aa)). Composition is skewed to basic and acidic residues over residues 13-30 (KANE…ETPK) and 37-50 (KKDT…KENA). A compositionally biased stretch (basic residues) spans 59–70 (TKGRPGRPAAKR). Positions 71 to 91 (KNLDTPDVKDEKIAMEEENPP) are enriched in basic and acidic residues. S104, S110, and S112 each carry phosphoserine. Residues 149–314 (WVEKQKDDVV…GQVIYRELER (166 aa)) enclose the 3'-5' exonuclease domain. Positions 163, 165, and 301 each coordinate Mg(2+).

The protein belongs to the WRNexo family.

The protein resides in the nucleus. In terms of biological role, has exonuclease activity on both single-stranded and duplex templates bearing overhangs, but not blunt ended duplex DNA, and cleaves in a 3'-5' direction. Essential for the formation of DNA replication focal centers. Has an important role in maintaining genome stability. This chain is 3'-5' exonuclease, found in Drosophila simulans (Fruit fly).